We begin with the raw amino-acid sequence, 357 residues long: Dynein axonemal assembly factor 10 (357 aa).

WD repeat units lie at residues 63 to 105 (EKAK…VPVY), 115 to 154 (NTIDGVGGLGIGEGAPEIVTGSRDGTVKVWDPRQKDDPVA), 162 to 205 (ENKR…LRWE), 207 to 249 (NIKN…PTKG), 257 to 297 (AHKS…QRSK), and 319 to 357 (LSTQPVSSLDWSPDKRGLCICSSFDQMVRVLIVTKLHKI).

Component of the PAQosome complex which is responsible for the biogenesis of several protein complexes and which consists of R2TP complex members RUVBL1, RUVBL2, RPAP3 and PIH1D1, URI complex members PFDN2, PFDN6, PDRG1, UXT and URI1 as well as ASDURF, POLR2E and DNAAF10/WDR92. Interacts with PIH1D1; the interaction associates DNAAF10 with the R2TP complex. Interacts with several dynein axonemal assembly factors.

It is found in the dynein axonemal particle. Functionally, key assembly factor specifically required for the stability of axonemal dynein heavy chains in cytoplasm. This is Dynein axonemal assembly factor 10 (DNAAF10) from Bos taurus (Bovine).